The sequence spans 280 residues: Tumor necrosis factor ligand superfamily member 6 (280 aa).

The Cytoplasmic segment spans residues 1–80 (MQQPFNYPYP…KKRGNHSTGL (80 aa)). The segment at 20–70 (SSPWAPPGTVLPCPTSVPRRPGQRRPPPPPPPPPLPPPPPSPLPPLPLPPL) is disordered. Pro residues predominate over residues 43–69 (RRPPPPPPPPPLPPPPPSPLPPLPLPP). A helical; Signal-anchor for type II membrane protein transmembrane segment spans residues 81–101 (CLLVMFFMVLVALVGLGLGMF). The Extracellular portion of the chain corresponds to 102–280 (QLFHLQKELA…SQTFFGLYKL (179 aa)). Positions 117 to 155 (TSQKHTASSLEKQIGHPSPPPEKKEQRKVAHLTGKPNSR) are disordered. In terms of domain architecture, THD spans 144–280 (KVAHLTGKPN…SQTFFGLYKL (137 aa)). N-linked (GlcNAc...) asparagine glycosylation occurs at N183. A disulfide bond links C201 and C232. Residues N249 and N259 are each glycosylated (N-linked (GlcNAc...) asparagine).

The protein belongs to the tumor necrosis factor family. In terms of assembly, homotrimer. Interacts with ARHGAP9, BAIAP2L1, BTK, CACNB3, CACNB4, CRK, DLG2, DNMBP, DOCK4, EPS8L3, FGR, FYB1, FYN, HCK, ITK, ITSN2, KALRN, LYN, MACC1, MIA, MPP4, MYO15A, NCF1, NCK1, NCK2, NCKIPSD, OSTF1, PIK3R1, PSTPIP1, RIMBP3C, SAMSN1, SH3GL3, SH3PXD2B, SH3PXD2A, SH3RF2, SKAP2, SNX33, SNX9, SORBS3, SPTA1, SRC, SRGAP1, SRGAP2, SRGAP3, TEC, TJP3 and YES1. The soluble form derives from the membrane form by proteolytic processing. The membrane-bound form undergoes two successive intramembrane proteolytic cleavages. The first one is processed by ADAM10 producing an N-terminal fragment, which lacks the receptor-binding extracellular domain. This ADAM10-processed FasL (FasL APL) remnant form is still membrane anchored and further processed by SPPL2A that liberates the FasL intracellular domain (FasL ICD). FasL shedding by ADAM10 is a prerequisite for subsequent intramembrane cleavage by SPPL2A in T-cells. In terms of processing, phosphorylated by FGR on tyrosine residues; this is required for ubiquitination and subsequent internalization. Post-translationally, N-glycosylated. Glycosylation enhances apoptotic activity. Monoubiquitinated.

The protein localises to the cell membrane. Its subcellular location is the cytoplasmic vesicle lumen. It localises to the lysosome lumen. The protein resides in the secreted. It is found in the nucleus. In terms of biological role, cytokine that binds to TNFRSF6/FAS, a receptor that transduces the apoptotic signal into cells. Involved in cytotoxic T-cell-mediated apoptosis, natural killer cell-mediated apoptosis and in T-cell development. Initiates fratricidal/suicidal activation-induced cell death (AICD) in antigen-activated T-cells contributing to the termination of immune responses. TNFRSF6/FAS-mediated apoptosis has also a role in the induction of peripheral tolerance. Binds to TNFRSF6B/DcR3, a decoy receptor that blocks apoptosis. Functionally, induces FAS-mediated activation of NF-kappa-B, initiating non-apoptotic signaling pathways. Can induce apoptosis but does not appear to be essential for this process. Its function is as follows. Cytoplasmic form induces gene transcription inhibition. This Macaca fascicularis (Crab-eating macaque) protein is Tumor necrosis factor ligand superfamily member 6 (FASLG).